A 181-amino-acid polypeptide reads, in one-letter code: MPVNDNNLIWIDLEMTGLDPERDRIIEIATLVTDANLAILAEGPVLAIYQSDAQLALMNDWNVRTHTASGLVDRVRQSALDEEAAVAQTLAFLADWVPAGKSPICGNSIGQDRRFLFRYMPALEAYFHYRYLDVSTLKELARRWKPEILSGLKKNNTHQALDDIRESVAELAYYREHFIRL.

The region spanning 8–171 (LIWIDLEMTG…DDIRESVAEL (164 aa)) is the Exonuclease domain. Tyr129 is a catalytic residue.

It belongs to the oligoribonuclease family.

Its subcellular location is the cytoplasm. 3'-to-5' exoribonuclease specific for small oligoribonucleotides. The sequence is that of Oligoribonuclease from Sodalis glossinidius (strain morsitans).